A 288-amino-acid chain; its full sequence is Polyamine aminopropyltransferase (288 aa).

The 230-residue stretch at 9-238 (ETLHDQFGQY…GIMTFAWATD (230 aa)) folds into the PABS domain. Gln-33 lines the S-methyl-5'-thioadenosine pocket. Spermidine-binding residues include His-64 and Asp-88. S-methyl-5'-thioadenosine contacts are provided by residues Glu-108 and 140–141 (DG). The active-site Proton acceptor is the Asp-158. A spermidine-binding site is contributed by 158–161 (DCTD). An S-methyl-5'-thioadenosine-binding site is contributed by Pro-165.

It belongs to the spermidine/spermine synthase family. Homodimer or homotetramer.

It localises to the cytoplasm. It carries out the reaction S-adenosyl 3-(methylsulfanyl)propylamine + putrescine = S-methyl-5'-thioadenosine + spermidine + H(+). It functions in the pathway amine and polyamine biosynthesis; spermidine biosynthesis; spermidine from putrescine: step 1/1. Catalyzes the irreversible transfer of a propylamine group from the amino donor S-adenosylmethioninamine (decarboxy-AdoMet) to putrescine (1,4-diaminobutane) to yield spermidine. This chain is Polyamine aminopropyltransferase, found in Shigella flexneri serotype 5b (strain 8401).